The sequence spans 207 residues: uncharacterized protein (207 aa).

The first 19 residues, 1–19, serve as a signal peptide directing secretion; sequence MRHGLLALICWLCCVVAHS.

The protein to P.aeruginosa PA4490 and T.maritima TM0986.

This is an uncharacterized protein from Escherichia coli (strain K12).